Consider the following 489-residue polypeptide: Protein nucleotidyltransferase YdiU (489 aa).

Positions 88, 90, 91, 111, 123, 124, 174, and 181 each coordinate ATP. Aspartate 250 functions as the Proton acceptor in the catalytic mechanism. Positions 251 and 260 each coordinate Mg(2+). Residue aspartate 260 participates in ATP binding.

This sequence belongs to the SELO family. Mg(2+) is required as a cofactor. Mn(2+) serves as cofactor.

The enzyme catalyses L-seryl-[protein] + ATP = 3-O-(5'-adenylyl)-L-seryl-[protein] + diphosphate. It carries out the reaction L-threonyl-[protein] + ATP = 3-O-(5'-adenylyl)-L-threonyl-[protein] + diphosphate. It catalyses the reaction L-tyrosyl-[protein] + ATP = O-(5'-adenylyl)-L-tyrosyl-[protein] + diphosphate. The catalysed reaction is L-histidyl-[protein] + UTP = N(tele)-(5'-uridylyl)-L-histidyl-[protein] + diphosphate. The enzyme catalyses L-seryl-[protein] + UTP = O-(5'-uridylyl)-L-seryl-[protein] + diphosphate. It carries out the reaction L-tyrosyl-[protein] + UTP = O-(5'-uridylyl)-L-tyrosyl-[protein] + diphosphate. Functionally, nucleotidyltransferase involved in the post-translational modification of proteins. It can catalyze the addition of adenosine monophosphate (AMP) or uridine monophosphate (UMP) to a protein, resulting in modifications known as AMPylation and UMPylation. This chain is Protein nucleotidyltransferase YdiU, found in Vibrio cholerae serotype O1 (strain ATCC 39315 / El Tor Inaba N16961).